Reading from the N-terminus, the 927-residue chain is Protein unc-45 homolog B (927 aa).

3 TPR repeats span residues 4–37, 41–74, and 76–108; these read PVQL…ITDK, AVLY…DASD, and KALF…EPKN. ARM repeat units lie at residues 167–206, 209–248, and 746–785; these read DAGA…GMCT, RARA…NIVD, and DKLR…NLAL.

As to expression, detected initially throughout the somites and the heart and gradually also expressed in the jaw, branchial arches and body wall muscles at later embryonic stages.

Its subcellular location is the cytoplasm. The protein localises to the myofibril. The protein resides in the sarcomere. It is found in the z line. It localises to the a band. Its subcellular location is the perinuclear region. The protein localises to the cytosol. Functionally, acts as a co-chaperone for HSP90 and is required for proper folding of the myosin motor domain. Plays a role in sarcomere formation during muscle cell development. Is necessary for normal early lens development. The polypeptide is Protein unc-45 homolog B (Xenopus tropicalis (Western clawed frog)).